The sequence spans 244 residues: MGHKVHPTGIRLGIAKDWNSKWYANKAEFASYLAADLKVREMLRKKLAQAGVSKILIERPAKTARVTIHTARPGVVIGKRGEDIEKLRKEVSELMGVPAHINVTEVRKPELDAQLVAESIAQQLERRIMFRRAMKRSVGNAMRLGALGIKVNVAGRLNGAEIARSEWYREGRVPLHTLRADIDYGFAEASTTYGIIGIKVWIYKGEVFDFSQVGQEKQDDSPRNDRNDRGDRGDRPSRPAREAR.

A KH type-2 domain is found at Val39–Arg107. The interval Val213–Arg244 is disordered. The segment covering Glu216–Arg244 has biased composition (basic and acidic residues).

This sequence belongs to the universal ribosomal protein uS3 family. In terms of assembly, part of the 30S ribosomal subunit. Forms a tight complex with proteins S10 and S14.

Its function is as follows. Binds the lower part of the 30S subunit head. Binds mRNA in the 70S ribosome, positioning it for translation. The protein is Small ribosomal subunit protein uS3 of Xanthomonas axonopodis pv. citri (strain 306).